The primary structure comprises 497 residues: tRNA (adenine(58)-N(1))-methyltransferase non-catalytic subunit TRM6 (497 aa).

2 disordered regions span residues 1–20 (MEGSGEQPGPQPQHPGDHRI) and 69–100 (TSGGSLQPKKKREEPTAETKEAGTDNRNIVDD). Over residues 79–100 (KREEPTAETKEAGTDNRNIVDD) the composition is skewed to basic and acidic residues. Position 94 to 104 (94 to 104 (NRNIVDDGKSQ)) interacts with substrate. Thr-107 carries the phosphothreonine modification. Substrate-binding positions include 145–154 (KYIKKKKKKY) and 175–182 (REPGKINH). The segment at 276–354 (SSEPKDSALV…EKQRRQEEQR (79 aa)) is disordered. Phosphoserine occurs at positions 298 and 305. Basic and acidic residues predominate over residues 327 to 354 (DPEHKGPKERGSKKDYIQEKQRRQEEQR). Substrate is bound by residues Arg-349, Arg-377, 415-423 (RERGGVINL), and 434-441 (QVLPDRSH). The disordered stretch occupies residues 472–497 (SNASTLESHETEEPAAKKRKCPESDS). Over residues 478 to 497 (ESHETEEPAAKKRKCPESDS) the composition is skewed to basic and acidic residues.

The protein belongs to the TRM6/GCD10 family. Heterotetramer; composed of two copies of TRMT6 and two copies of TRMT61A. In terms of tissue distribution, expressed in brain, liver, testis and ovary.

It is found in the nucleus. Its function is as follows. Substrate-binding subunit of tRNA (adenine-N(1)-)-methyltransferase, which catalyzes the formation of N(1)-methyladenine at position 58 (m1A58) in initiator methionyl-tRNA. Together with the TRMT61A catalytic subunit, part of a mRNA N(1)-methyltransferase complex that mediates methylation of adenosine residues at the N(1) position of a small subset of mRNAs: N(1) methylation takes place in tRNA T-loop-like structures of mRNAs and is only present at low stoichiometries. The protein is tRNA (adenine(58)-N(1))-methyltransferase non-catalytic subunit TRM6 (TRMT6) of Homo sapiens (Human).